Consider the following 228-residue polypeptide: MKTLIHNDWQTVLEPVFESPEYAQLHAFLKEEYATKTIYPEMHHIFQAFEWTPFHDVKVVILGQDPYHNPRQAVGASFAVAPGVALPPSLQNIYKELQSDLGYPPVHHGYLKAWADQGVLLLNAVLTVQAGEAYSHQNHGWEELTDAAIAALSARGGVVFILWGNAAKKKAAVIDTSKNAIIASAHPSPLSASRGFFGSRPFSRTNAALEKMGEAPINWQLPETVKAD.

Asp65 serves as the catalytic Proton acceptor.

Belongs to the uracil-DNA glycosylase (UDG) superfamily. UNG family.

The protein localises to the cytoplasm. It catalyses the reaction Hydrolyzes single-stranded DNA or mismatched double-stranded DNA and polynucleotides, releasing free uracil.. In terms of biological role, excises uracil residues from the DNA which can arise as a result of misincorporation of dUMP residues by DNA polymerase or due to deamination of cytosine. This Lacticaseibacillus paracasei (strain ATCC 334 / BCRC 17002 / CCUG 31169 / CIP 107868 / KCTC 3260 / NRRL B-441) (Lactobacillus paracasei) protein is Uracil-DNA glycosylase.